A 709-amino-acid chain; its full sequence is Phosphoribosylformylglycinamidine synthase subunit PurL (709 aa).

His-36 is a catalytic residue. Residues Tyr-39 and Lys-80 each contribute to the ATP site. Mg(2+) is bound at residue Glu-82. Residues 83–86 and Arg-105 contribute to the substrate site; that span reads SHNH. The active-site Proton acceptor is the His-84. A Mg(2+)-binding site is contributed by Asp-106. Gln-226 lines the substrate pocket. Mg(2+) is bound at residue Asp-252. 294–296 provides a ligand contact to substrate; sequence ETQ. ATP-binding residues include Asp-470 and Gly-507. Ser-510 lines the substrate pocket.

It belongs to the FGAMS family. In terms of assembly, monomer. Part of the FGAM synthase complex composed of 1 PurL, 1 PurQ and 2 PurS subunits.

The protein resides in the cytoplasm. The catalysed reaction is N(2)-formyl-N(1)-(5-phospho-beta-D-ribosyl)glycinamide + L-glutamine + ATP + H2O = 2-formamido-N(1)-(5-O-phospho-beta-D-ribosyl)acetamidine + L-glutamate + ADP + phosphate + H(+). Its pathway is purine metabolism; IMP biosynthesis via de novo pathway; 5-amino-1-(5-phospho-D-ribosyl)imidazole from N(2)-formyl-N(1)-(5-phospho-D-ribosyl)glycinamide: step 1/2. Its function is as follows. Part of the phosphoribosylformylglycinamidine synthase complex involved in the purines biosynthetic pathway. Catalyzes the ATP-dependent conversion of formylglycinamide ribonucleotide (FGAR) and glutamine to yield formylglycinamidine ribonucleotide (FGAM) and glutamate. The FGAM synthase complex is composed of three subunits. PurQ produces an ammonia molecule by converting glutamine to glutamate. PurL transfers the ammonia molecule to FGAR to form FGAM in an ATP-dependent manner. PurS interacts with PurQ and PurL and is thought to assist in the transfer of the ammonia molecule from PurQ to PurL. The chain is Phosphoribosylformylglycinamidine synthase subunit PurL from Saccharolobus islandicus (strain M.16.4 / Kamchatka #3) (Sulfolobus islandicus).